A 969-amino-acid chain; its full sequence is Poly(ADP-ribose) glycohydrolase (969 aa).

Disordered stretches follow at residues 1–149 (MSAG…QQQT), 161–341 (HAEQ…CQAR), and 368–400 (NNAG…GKRD). The segment at 1–449 (MSAGPGWEPC…LPPEKKWLGT (449 aa)) is A-domain. A Nuclear localization signal motif is present at residues 10 to 16 (CTKRPRW). The span at 69–84 (NATSFVFKQKTITTWM) shows a compositional bias: polar residues. The PIP-box (PCNA interacting peptide) motif lies at 77 to 84 (QKTITTWM). Positions 87–100 (KGPKTAESESKENN) are enriched in basic and acidic residues. Over residues 101-113 (NTRIDSMMSSVQK) the composition is skewed to polar residues. Over residues 116 to 125 (FYPHKVEKLE) the composition is skewed to basic and acidic residues. 2 stretches are compositionally biased toward polar residues: residues 128–149 (PQLN…QQQT) and 179–189 (QLSNANIGQSP). A Phosphoserine modification is found at serine 135. Threonine 137 carries the phosphothreonine modification. A compositionally biased stretch (basic and acidic residues) spans 190–205 (HTDDHSDTDHEEDRDN). Serine 195 carries the post-translational modification Phosphoserine. Threonine 197 is subject to Phosphothreonine. Residues 226–237 (ARSNCKCSGSRQ) are compositionally biased toward polar residues. 7 positions are modified to phosphoserine: serine 256, serine 259, serine 281, serine 286, serine 293, serine 297, and serine 311. Residues 275 to 284 (KLTGQESSLG) show a composition bias toward polar residues. The span at 311–325 (SEADEETSPVFDEQD) shows a compositional bias: acidic residues. Polar residues-rich tracts occupy residues 329–339 (SQTANKLSSCQ) and 369–387 (NAGT…SSLN). N6-acetyllysine is present on lysine 334. The catalytic stretch occupies residues 603 to 788 (QPIPLLKQKM…TEQYSEYTGY (186 aa)). Residue 719–720 (IE) participates in substrate binding. The active site involves aspartate 730. 2 residues coordinate substrate: asparagine 733 and glutamine 747. Catalysis depends on residues glutamate 748 and glutamate 749. Residues tyrosine 788 and 862–867 (NWGCGA) each bind substrate.

This sequence belongs to the poly(ADP-ribose) glycohydrolase family. Interacts with PCNA. Interacts with NUDT5.

Its subcellular location is the nucleus. It carries out the reaction [(1''-&gt;2')-ADP-alpha-D-ribose](n) + H2O = [(1''-&gt;2')-ADP-alpha-D-ribose](n-1) + ADP-D-ribose. Poly(ADP-ribose) glycohydrolase that degrades poly(ADP-ribose) by hydrolyzing the ribose-ribose bonds present in poly(ADP-ribose). PARG acts both as an endo- and exoglycosidase, releasing poly(ADP-ribose) of different length as well as ADP-ribose monomers. It is however unable to cleave the ester bond between the terminal ADP-ribose and ADP-ribosylated residues, leaving proteins that are mono-ADP-ribosylated. Poly(ADP-ribose) is synthesized after DNA damage is only present transiently and is rapidly degraded by PARG. Required to prevent detrimental accumulation of poly(ADP-ribose) upon prolonged replicative stress, while it is not required for recovery from transient replicative stress. Responsible for the prevalence of mono-ADP-ribosylated proteins in cells, thanks to its ability to degrade poly(ADP-ribose) without cleaving the terminal protein-ribose bond. Required for retinoid acid-dependent gene transactivation, probably by removing poly(ADP-ribose) from histone demethylase KDM4D, allowing chromatin derepression at RAR-dependent gene promoters. Involved in the synthesis of ATP in the nucleus, together with PARP1, NMNAT1 and NUDT5. Nuclear ATP generation is required for extensive chromatin remodeling events that are energy-consuming. The protein is Poly(ADP-ribose) glycohydrolase of Mus musculus (Mouse).